Consider the following 623-residue polypeptide: UvrABC system protein C (623 aa).

The 80-residue stretch at 21 to 100 (AEPGVYLMRD…IKTHQPPYNV (80 aa)) folds into the GIY-YIG domain. In terms of domain architecture, UVR spans 210 to 245 (DELIRELQEKMIQAAEQENYEAAARYRDQIRGLEQL).

This sequence belongs to the UvrC family. In terms of assembly, interacts with UvrB in an incision complex.

It is found in the cytoplasm. The UvrABC repair system catalyzes the recognition and processing of DNA lesions. UvrC both incises the 5' and 3' sides of the lesion. The N-terminal half is responsible for the 3' incision and the C-terminal half is responsible for the 5' incision. In Synechococcus sp. (strain JA-2-3B'a(2-13)) (Cyanobacteria bacterium Yellowstone B-Prime), this protein is UvrABC system protein C.